Consider the following 130-residue polypeptide: MAENQNYGTGRRKSSSARVFIKPGSGKITINQRELDVYFGRETARMVVRQPLELVXLTDKLDLYITVKGGGISGQAGAIRHGITRALMEYDETLRPALRAAGFVTRDARRVERKKVGLHKARRRPQYSKR.

This sequence belongs to the universal ribosomal protein uS9 family.

This is Small ribosomal subunit protein uS9 (rpsI) from Haemophilus influenzae (strain ATCC 51907 / DSM 11121 / KW20 / Rd).